A 461-amino-acid chain; its full sequence is ATP synthase subunit beta 2 (461 aa).

Position 151-158 (151-158) interacts with ATP; sequence GGAGVGKT.

The protein belongs to the ATPase alpha/beta chains family. As to quaternary structure, F-type ATPases have 2 components, CF(1) - the catalytic core - and CF(0) - the membrane proton channel. CF(1) has five subunits: alpha(3), beta(3), gamma(1), delta(1), epsilon(1). CF(0) has three main subunits: a(1), b(2) and c(9-12). The alpha and beta chains form an alternating ring which encloses part of the gamma chain. CF(1) is attached to CF(0) by a central stalk formed by the gamma and epsilon chains, while a peripheral stalk is formed by the delta and b chains.

It localises to the cell inner membrane. It catalyses the reaction ATP + H2O + 4 H(+)(in) = ADP + phosphate + 5 H(+)(out). Produces ATP from ADP in the presence of a proton gradient across the membrane. The catalytic sites are hosted primarily by the beta subunits. The chain is ATP synthase subunit beta 2 from Vibrio campbellii (strain ATCC BAA-1116).